Reading from the N-terminus, the 185-residue chain is Ribosome-recycling factor (185 aa).

Belongs to the RRF family.

Its subcellular location is the cytoplasm. Its function is as follows. Responsible for the release of ribosomes from messenger RNA at the termination of protein biosynthesis. May increase the efficiency of translation by recycling ribosomes from one round of translation to another. The protein is Ribosome-recycling factor of Halalkalibacterium halodurans (strain ATCC BAA-125 / DSM 18197 / FERM 7344 / JCM 9153 / C-125) (Bacillus halodurans).